A 152-amino-acid polypeptide reads, in one-letter code: FAD synthase (152 aa).

ATP contacts are provided by residues T16–F17, H21–H24, D101, and Y129.

It belongs to the archaeal FAD synthase family. In terms of assembly, homodimer. It depends on a divalent metal cation as a cofactor.

The catalysed reaction is FMN + ATP + H(+) = FAD + diphosphate. It participates in cofactor biosynthesis; FAD biosynthesis; FAD from FMN: step 1/1. Catalyzes the transfer of the AMP portion of ATP to flavin mononucleotide (FMN) to produce flavin adenine dinucleotide (FAD) coenzyme. This is FAD synthase from Methanocaldococcus vulcanius (strain ATCC 700851 / DSM 12094 / M7) (Methanococcus vulcanius).